A 642-amino-acid chain; its full sequence is Nocturnin (642 aa).

Positions 50-87 are disordered; the sequence is LEDDDKPPQLFSVTDEPPSPNEEDYKPPNHHEDDGKLA. Residues 72–87 are compositionally biased toward basic and acidic residues; the sequence is EDYKPPNHHEDDGKLA. Glu363 lines the Mg(2+) pocket. Substrate-binding positions include Glu363, Asn430, 453 to 456, 491 to 493, and His600; these read HLKA and DFN. The segment at 611–642 is disordered; the sequence is PPTENGKESGSGSGSDGENETEVEGSKHGSIQ.

Belongs to the CCR4/nocturin family. As to quaternary structure, associates to the CCR4-NOT complex composed of at least Pop2/Caf1-55, Ccr4, Not1, Rga/Not2, and Not3. Mg(2+) serves as cofactor. As to expression, expressed in the head, in the dorsal neurons DN3, a subgroup of clock neurons (at protein level). Ubiquitously expressed in both males and females.

The protein localises to the cytoplasm. The catalysed reaction is NADP(+) + H2O = phosphate + NAD(+). The enzyme catalyses NADPH + H2O = phosphate + NADH. Functionally, phosphatase which catalyzes the conversion of NADP(+) to NAD(+) and of NADPH to NADH. Shows a small preference for NADPH over NADP(+). Because of its association with the CCR4-NOT complex, has a role in mRNA deadenylation and decay. Required at the pupal stage for proper wing morphogenesis after eclosion. In terms of biological role, doesn't have a role in light-mediated behavioral response. In dorsal neurons, contributes to the light-mediated behavioral response. The polypeptide is Nocturnin (Drosophila melanogaster (Fruit fly)).